Consider the following 473-residue polypeptide: Ribulose bisphosphate carboxylase large chain (473 aa).

2 residues coordinate substrate: N116 and T166. K168 serves as the catalytic Proton acceptor. Residue K170 participates in substrate binding. Residues K194, D196, and E197 each contribute to the Mg(2+) site. N6-carboxylysine is present on K194. The Proton acceptor role is filled by H287. Residues R288, H320, and S372 each coordinate substrate.

The protein belongs to the RuBisCO large chain family. Type I subfamily. In terms of assembly, heterohexadecamer of 8 large chains and 8 small chains. Mg(2+) is required as a cofactor.

It carries out the reaction 2 (2R)-3-phosphoglycerate + 2 H(+) = D-ribulose 1,5-bisphosphate + CO2 + H2O. The enzyme catalyses D-ribulose 1,5-bisphosphate + O2 = 2-phosphoglycolate + (2R)-3-phosphoglycerate + 2 H(+). In terms of biological role, ruBisCO catalyzes two reactions: the carboxylation of D-ribulose 1,5-bisphosphate, the primary event in carbon dioxide fixation, as well as the oxidative fragmentation of the pentose substrate. Both reactions occur simultaneously and in competition at the same active site. The protein is Ribulose bisphosphate carboxylase large chain of Nitrosospira sp. (strain TCH716).